The primary structure comprises 152 residues: Large ribosomal subunit protein uL22 (152 aa).

It belongs to the universal ribosomal protein uL22 family. Part of the 50S ribosomal subunit.

This protein binds specifically to 23S rRNA. It makes multiple contacts with different domains of the 23S rRNA in the assembled 50S subunit and ribosome. Its function is as follows. The globular domain of the protein is located near the polypeptide exit tunnel on the outside of the subunit, while an extended beta-hairpin is found that lines the wall of the exit tunnel in the center of the 70S ribosome. This is Large ribosomal subunit protein uL22 from Nitrosopumilus maritimus (strain SCM1).